Reading from the N-terminus, the 229-residue chain is Large ribosomal subunit protein uL1 (229 aa).

Belongs to the universal ribosomal protein uL1 family. Part of the 50S ribosomal subunit.

Binds directly to 23S rRNA. The L1 stalk is quite mobile in the ribosome, and is involved in E site tRNA release. Its function is as follows. Protein L1 is also a translational repressor protein, it controls the translation of the L11 operon by binding to its mRNA. This Streptococcus pneumoniae serotype 2 (strain D39 / NCTC 7466) protein is Large ribosomal subunit protein uL1.